Consider the following 112-residue polypeptide: Ribonuclease P protein component (112 aa).

It belongs to the RnpA family. As to quaternary structure, consists of a catalytic RNA component (M1 or rnpB) and a protein subunit.

The enzyme catalyses Endonucleolytic cleavage of RNA, removing 5'-extranucleotides from tRNA precursor.. Its function is as follows. RNaseP catalyzes the removal of the 5'-leader sequence from pre-tRNA to produce the mature 5'-terminus. It can also cleave other RNA substrates such as 4.5S RNA. The protein component plays an auxiliary but essential role in vivo by binding to the 5'-leader sequence and broadening the substrate specificity of the ribozyme. The polypeptide is Ribonuclease P protein component (Mesomycoplasma hyopneumoniae (strain 7448) (Mycoplasma hyopneumoniae)).